Consider the following 669-residue polypeptide: GTP-binding protein 1 (669 aa).

The disordered stretch occupies residues 1–32; it reads MATERSRSAMDSPVPASMFAPEPSSPGAARAA. Residues serine 6, serine 8, serine 12, serine 24, serine 25, serine 44, serine 47, and serine 69 each carry the phosphoserine modification. One can recognise a tr-type G domain in the interval 158 to 389; it reads FLEVRVAVVG…LNLLSPRTSY (232 aa). The interval 167–174 is G1; that stretch reads GNVDAGKS. 167-174 serves as a coordination point for GTP; it reads GNVDAGKS. Residues 206–210 form a G2 region; that stretch reads GRTSS. Residues 252–255 are G3; sequence DLAG. GTP is bound by residues 252 to 256 and 308 to 311; these read DLAGH and TKID. The tract at residues 308-311 is G4; sequence TKID. The interval 366 to 368 is G5; sequence SNV. A compositionally biased stretch (polar residues) spans 573 to 595; sequence LLQTTNNSPMNSKPQQIKMQSTK. A disordered region spans residues 573 to 669; that stretch reads LLQTTNNSPM…GACVTPASGC (97 aa). Phosphoserine is present on serine 580. Over residues 646–657 the composition is skewed to basic residues; that stretch reads GRRRGGQRHKVK.

Belongs to the TRAFAC class translation factor GTPase superfamily. Classic translation factor GTPase family. GTPBP1 subfamily. Interacts with EXOSC2/RRP4, EXOSC3/RRP40, EXOSC5/RRP46, HNRNPD, HNRNPR and SYNCRIP. Identified in a complex with AANAT mRNA, but does not bind mRNA by itself.

The protein localises to the cytoplasm. Functionally, promotes degradation of target mRNA species. Plays a role in the regulation of circadian mRNA stability. Binds GTP and has GTPase activity. The sequence is that of GTP-binding protein 1 (GTPBP1) from Homo sapiens (Human).